The chain runs to 55 residues: Large ribosomal subunit protein bL33 (55 aa).

The protein belongs to the bacterial ribosomal protein bL33 family.

This is Large ribosomal subunit protein bL33 from Methylobacterium sp. (strain 4-46).